The chain runs to 147 residues: Large ribosomal subunit protein uL13 (147 aa).

A disordered region spans residues 126–147; that stretch reads AGPTHPHQAQQPVPYEIKQVAQ.

The protein belongs to the universal ribosomal protein uL13 family. Part of the 50S ribosomal subunit.

This protein is one of the early assembly proteins of the 50S ribosomal subunit, although it is not seen to bind rRNA by itself. It is important during the early stages of 50S assembly. This is Large ribosomal subunit protein uL13 from Parafrankia sp. (strain EAN1pec).